A 109-amino-acid chain; its full sequence is Spermidine export protein MdtI (109 aa).

Transmembrane regions (helical) follow at residues tryptophan 6–leucine 26, valine 36–valine 56, alanine 64–phenylalanine 84, and leucine 88–leucine 108.

This sequence belongs to the drug/metabolite transporter (DMT) superfamily. Small multidrug resistance (SMR) (TC 2.A.7.1) family. MdtI subfamily. Forms a complex with MdtJ.

It localises to the cell inner membrane. Catalyzes the excretion of spermidine. This is Spermidine export protein MdtI from Klebsiella pneumoniae (strain 342).